Here is a 454-residue protein sequence, read N- to C-terminus: Divalent metal cation transporter MntH (454 aa).

The interval 1–21 (MSDAEATAPRSSWRFAGRDED) is disordered. The next 11 membrane-spanning stretches (helical) occupy residues 45–65 (LFAF…PGNW), 78–98 (TLLF…ALAA), 122–142 (FVLW…EVIG), 153–173 (IPLI…LLLM), 182–202 (AFVI…IFVA), 220–240 (IVTN…TVMP), 275–295 (IALM…AVAF), 312–332 (LLSP…ALLA), 368–388 (GLAI…GTGQ), 389–409 (LLVF…VPLV), and 426–446 (GVAA…FKLL).

This sequence belongs to the NRAMP family.

The protein resides in the cell inner membrane. Functionally, h(+)-stimulated, divalent metal cation uptake system. The chain is Divalent metal cation transporter MntH from Mesorhizobium japonicum (strain LMG 29417 / CECT 9101 / MAFF 303099) (Mesorhizobium loti (strain MAFF 303099)).